Here is a 514-residue protein sequence, read N- to C-terminus: Membrane-bound lytic murein transglycosylase F (514 aa).

The N-terminal stretch at 1-30 (MLSNNPLITKFRELFTVALVLALLSGCQWQ) is a signal peptide. A non-LT domain region spans residues 31–271 (DDNLTDLEKI…QLEEKYFGHV (241 aa)). Residues 272–514 (GSFDYVDTRA…KTIEDPGPSQ (243 aa)) are LT domain. Residue glutamate 316 is part of the active site. The tract at residues 482–514 (PVPPRQANVDGSLNNEAAISSAEKTIEDPGPSQ) is disordered. Over residues 490–499 (VDGSLNNEAA) the composition is skewed to polar residues.

In the N-terminal section; belongs to the bacterial solute-binding protein 3 family. The protein in the C-terminal section; belongs to the transglycosylase Slt family.

The protein resides in the cell outer membrane. It carries out the reaction Exolytic cleavage of the (1-&gt;4)-beta-glycosidic linkage between N-acetylmuramic acid (MurNAc) and N-acetylglucosamine (GlcNAc) residues in peptidoglycan, from either the reducing or the non-reducing ends of the peptidoglycan chains, with concomitant formation of a 1,6-anhydrobond in the MurNAc residue.. In terms of biological role, murein-degrading enzyme that degrades murein glycan strands and insoluble, high-molecular weight murein sacculi, with the concomitant formation of a 1,6-anhydromuramoyl product. Lytic transglycosylases (LTs) play an integral role in the metabolism of the peptidoglycan (PG) sacculus. Their lytic action creates space within the PG sacculus to allow for its expansion as well as for the insertion of various structures such as secretion systems and flagella. This chain is Membrane-bound lytic murein transglycosylase F, found in Photobacterium profundum (strain SS9).